The sequence spans 115 residues: Large ribosomal subunit protein P2 (115 aa).

Position 1 is an N-acetylmethionine (Met1). Ser17 and Ser19 each carry phosphoserine. Residue Lys21 is modified to N6-acetyllysine; alternate. Lys21 is subject to N6-succinyllysine; alternate. Low complexity predominate over residues 76–90 (APGSAAPAAGSAPAA). The segment at 76–115 (APGSAAPAAGSAPAAAEEKKEEKKEESEESDDDMGFGLFD) is disordered. Phosphoserine occurs at positions 79 and 86. Basic and acidic residues predominate over residues 91-101 (AEEKKEEKKEE). A phosphoserine mark is found at Ser102 and Ser105.

Belongs to the eukaryotic ribosomal protein P1/P2 family. Heterodimer with RPLP1 at the lateral ribosomal stalk of the large ribosomal subunit.

Functionally, plays an important role in the elongation step of protein synthesis. The polypeptide is Large ribosomal subunit protein P2 (RPLP2) (Bos taurus (Bovine)).